A 216-amino-acid polypeptide reads, in one-letter code: MRLTALLSMAAKVALPHGYRYGTNRPWTIAARRLNPPGKRRRKVFVEPIANEDWPVVRGDTVEVLSGKEKGKQGKVAQVIRARNWVILEGLNTHYRYVGRSGDYRGTYLASEAPLLLKDIALIDPTDRKPTEIQWRYTEEGERVRVSVRTGRIIPKPVFQRKDGIVPQQWKDGPKDTSPEDTLQKTYTPSLKTLEEEVMEKMNIQENRRPRKSYWY.

A mitochondrion-targeting transit peptide spans 1–9 (MRLTALLSM). A KOW domain is found at 56–89 (VVRGDTVEVLSGKEKGKQGKVAQVIRARNWVILE). The segment at 167–186 (PQQWKDGPKDTSPEDTLQKT) is disordered.

Belongs to the universal ribosomal protein uL24 family. Component of the mitochondrial ribosome large subunit (39S) which comprises a 16S rRNA and about 50 distinct proteins.

The protein resides in the mitochondrion. This chain is Large ribosomal subunit protein uL24m (mrpl24), found in Danio rerio (Zebrafish).